We begin with the raw amino-acid sequence, 227 residues long: Cytosolic-abundant heat soluble protein 106094 (227 aa).

Residues 1–28 (MEAMNMNIPRDAMFVPPPESEQNGYHEK) form a disordered region. Positions 90-140 (VEEARRDYAAKTRENEMLGQQYEKELERKSEAYRKHQEVEADKIRKELEKQ) form a coiled coil. CAHS motif stretches follow at residues 122–140 (YRKH…LEKQ) and 159–177 (QKRM…MDRE). A disordered region spans residues 198–227 (LDSSAAGTESGGHVVSQSEKFTERNREMKR). Positions 217–227 (KFTERNREMKR) are enriched in basic and acidic residues.

The protein belongs to the Cytosolic-abundant heat soluble protein (CAHS) family.

The protein resides in the cytoplasm. Its function is as follows. CAHS proteins are cytosolic heat soluble proteins that seem to contribute to the anhydrobiosis in tardigrades, but their specific mechanisms are yet to be identified. It is possible that protection during anhydrobiosis might occur via the stabilization of vitrifying small molecules such as sugars, but not via the direct glass transition of CAHS proteins themselves. This Paramacrobiotus richtersi (Water bear) protein is Cytosolic-abundant heat soluble protein 106094.